The primary structure comprises 143 residues: Putative RNA polymerase II subunit B1 CTD phosphatase RPAP2 homolog (143 aa).

Residues 46–129 (SLLCEIGPPN…VPTSPLWLRD (84 aa)) form an RTR1-type zinc finger. Positions 69, 74, 105, and 109 each coordinate Zn(2+).

This sequence belongs to the RPAP2 family.

It is found in the nucleus. It catalyses the reaction O-phospho-L-seryl-[protein] + H2O = L-seryl-[protein] + phosphate. It carries out the reaction O-phospho-L-threonyl-[protein] + H2O = L-threonyl-[protein] + phosphate. Its function is as follows. Putative RNA polymerase II subunit B1 C-terminal domain (CTD) phosphatase involved in RNA polymerase II transcription regulation. The protein is Putative RNA polymerase II subunit B1 CTD phosphatase RPAP2 homolog of Drosophila melanogaster (Fruit fly).